The chain runs to 81 residues: D-alanyl carrier protein (81 aa).

The Carrier domain occupies 1–81 (MADEAIKNGV…KIIAKVEQAQ (81 aa)). Serine 39 bears the O-(pantetheine 4'-phosphoryl)serine mark.

This sequence belongs to the DltC family. 4'-phosphopantetheine is transferred from CoA to a specific serine of apo-DCP.

It localises to the cytoplasm. The protein operates within cell wall biogenesis; lipoteichoic acid biosynthesis. In terms of biological role, carrier protein involved in the D-alanylation of lipoteichoic acid (LTA). The loading of thioester-linked D-alanine onto DltC is catalyzed by D-alanine--D-alanyl carrier protein ligase DltA. The DltC-carried D-alanyl group is further transferred to cell membrane phosphatidylglycerol (PG) by forming an ester bond, probably catalyzed by DltD. D-alanylation of LTA plays an important role in modulating the properties of the cell wall in Gram-positive bacteria, influencing the net charge of the cell wall. In Lacticaseibacillus rhamnosus (Lactobacillus rhamnosus), this protein is D-alanyl carrier protein.